Consider the following 400-residue polypeptide: Poly(A) polymerase type 3 (400 aa).

ATP contacts are provided by residues 97–99 (FGS), threonine 106, 110–112 (DID), aspartate 164, lysine 225, tyrosine 234, and 243–244 (GV). Mg(2+) is bound by residues aspartate 110, aspartate 112, and aspartate 164. A Nuclear localization signal motif is present at residues 382–390 (GEIINKNKK).

It belongs to the poly(A) polymerase family. As to quaternary structure, monomer. The cofactor is Mg(2+). Mn(2+) serves as cofactor.

It localises to the nucleus. The catalysed reaction is RNA(n) + ATP = RNA(n)-3'-adenine ribonucleotide + diphosphate. In terms of biological role, polymerase that creates the 3'-poly(A) tail of mRNA's. May acquire specificity through interaction with a cleavage and polyadenylation factor (CPSF). The sequence is that of Poly(A) polymerase type 3 from Xenopus laevis (African clawed frog).